A 389-amino-acid polypeptide reads, in one-letter code: Cytochrome b (389 aa).

The next 4 membrane-spanning stretches (helical) occupy residues 32–52, 76–98, 113–133, and 179–199; these read FGSL…FLAM, WIVR…AHIG, LWSI…LGYV, and FFSL…AHFM. Residues H82 and H96 each contribute to the heme b site. Residues H183 and H197 each contribute to the heme b site. H202 is a binding site for a ubiquinone. The next 4 helical transmembrane spans lie at 225–245, 289–309, 321–341, and 348–368; these read FIFK…VIVF, LLGV…PLTD, AMKF…WLGS, and YLEI…VIVP.

Belongs to the cytochrome b family. Fungal cytochrome b-c1 complex contains 10 subunits; 3 respiratory subunits, 2 core proteins and 5 low-molecular weight proteins. Cytochrome b-c1 complex is a homodimer. Heme b is required as a cofactor.

The protein localises to the mitochondrion inner membrane. Its function is as follows. Component of the ubiquinol-cytochrome c reductase complex (complex III or cytochrome b-c1 complex) that is part of the mitochondrial respiratory chain. The b-c1 complex mediates electron transfer from ubiquinol to cytochrome c. Contributes to the generation of a proton gradient across the mitochondrial membrane that is then used for ATP synthesis. This Strobilurus tenacellus protein is Cytochrome b (COB).